A 204-amino-acid polypeptide reads, in one-letter code: Phosphoribosyl-dephospho-CoA transferase (204 aa).

Residues Asp129 and Asp131 contribute to the active site.

This sequence belongs to the MdcG family.

It carries out the reaction apo-[malonate decarboxylase ACP] + 2'-(5''-triphospho-alpha-D-ribosyl)-3'-dephospho-CoA = holo-[malonate decarboxylase ACP] + diphosphate. Functionally, transfers 2'-(5-triphosphoribosyl)-3'-dephosphocoenzyme-A to the apo-[acyl-carrier-protein] of the malonate decarboxylase to yield holo-[acyl-carrier-protein]. The sequence is that of Phosphoribosyl-dephospho-CoA transferase from Pseudomonas putida (strain W619).